A 596-amino-acid polypeptide reads, in one-letter code: Aspartic proteinase yapsin-7 (596 aa).

The N-terminal stretch at 1 to 25 is a signal peptide; sequence MTCLILWYLWLISTFQLEFATASTA. Residues Asn-26 and Asn-59 are each glycosylated (N-linked (GlcNAc...) asparagine). The Lumenal segment spans residues 26–575; sequence NTTTTAKSGT…SPYTFNKDPA (550 aa). Residues 56–440 form the Peptidase A1 domain; sequence YYVNSTFGTP…DLEDNTIAIA (385 aa). Asp-74 is a catalytic residue. Asn-106, Asn-131, Asn-140, Asn-143, Asn-148, Asn-175, and Asn-308 each carry an N-linked (GlcNAc...) asparagine glycan. Asp-321 is a catalytic residue. N-linked (GlcNAc...) asparagine glycosylation is found at Asn-391, Asn-455, Asn-478, Asn-484, Asn-549, and Asn-552. The chain crosses the membrane as a helical span at residues 576 to 596; it reads GHVTRIASLLLLSIFSILIVL.

The protein belongs to the peptidase A1 family.

The protein resides in the cytoplasm. The protein localises to the endoplasmic reticulum membrane. The chain is Aspartic proteinase yapsin-7 (YPS7) from Saccharomyces cerevisiae (strain ATCC 204508 / S288c) (Baker's yeast).